The chain runs to 499 residues: Probable cytosol aminopeptidase (499 aa).

Residues lysine 264 and aspartate 269 each coordinate Mn(2+). The active site involves lysine 276. Mn(2+) is bound by residues aspartate 287, aspartate 346, and glutamate 348. Arginine 350 is an active-site residue.

Belongs to the peptidase M17 family. Requires Mn(2+) as cofactor.

It is found in the cytoplasm. The enzyme catalyses Release of an N-terminal amino acid, Xaa-|-Yaa-, in which Xaa is preferably Leu, but may be other amino acids including Pro although not Arg or Lys, and Yaa may be Pro. Amino acid amides and methyl esters are also readily hydrolyzed, but rates on arylamides are exceedingly low.. It carries out the reaction Release of an N-terminal amino acid, preferentially leucine, but not glutamic or aspartic acids.. Functionally, presumably involved in the processing and regular turnover of intracellular proteins. Catalyzes the removal of unsubstituted N-terminal amino acids from various peptides. In Rhodopseudomonas palustris (strain BisB18), this protein is Probable cytosol aminopeptidase.